The sequence spans 143 residues: Peptide methionine sulfoxide reductase MsrB (143 aa).

In terms of domain architecture, MsrB spans 5–127 (NEELKKKLTP…NSAALRFIPK (123 aa)). Catalysis depends on C116, which acts as the Nucleophile.

It belongs to the MsrB Met sulfoxide reductase family.

It carries out the reaction L-methionyl-[protein] + [thioredoxin]-disulfide + H2O = L-methionyl-(R)-S-oxide-[protein] + [thioredoxin]-dithiol. The polypeptide is Peptide methionine sulfoxide reductase MsrB (Halalkalibacterium halodurans (strain ATCC BAA-125 / DSM 18197 / FERM 7344 / JCM 9153 / C-125) (Bacillus halodurans)).